We begin with the raw amino-acid sequence, 366 residues long: Cobalt-precorrin-5B C(1)-methyltransferase (366 aa).

It belongs to the CbiD family.

It catalyses the reaction Co-precorrin-5B + S-adenosyl-L-methionine = Co-precorrin-6A + S-adenosyl-L-homocysteine. The protein operates within cofactor biosynthesis; adenosylcobalamin biosynthesis; cob(II)yrinate a,c-diamide from sirohydrochlorin (anaerobic route): step 6/10. In terms of biological role, catalyzes the methylation of C-1 in cobalt-precorrin-5B to form cobalt-precorrin-6A. This Pseudomonas aeruginosa (strain UCBPP-PA14) protein is Cobalt-precorrin-5B C(1)-methyltransferase.